Consider the following 132-residue polypeptide: Agouti-signaling protein (132 aa).

Positions 1–22 are cleaved as a signal peptide; it reads MDVTRLLLATLLVFLCFFTAYS. N39 carries an N-linked (GlcNAc...) asparagine glycan. Residues 61 to 87 are disordered; sequence QISRKEAEKKRSSKKEASMKKVARPRT. Residues 63-79 show a composition bias toward basic and acidic residues; sequence SRKEAEKKRSSKKEASM. 5 disulfides stabilise this stretch: C93–C108, C100–C114, C107–C125, C111–C132, and C116–C123. The 40-residue stretch at 93–132 folds into the Agouti domain; that stretch reads CVATRDSCKPPAPACCDPCAFCQCRFFRSACSCRVLSLNC.

Its subcellular location is the secreted. Its function is as follows. Involved in the regulation of melanogenesis. The binding of ASP to MC1R precludes alpha-MSH initiated signaling and thus blocks production of cAMP, leading to a down-regulation of eumelanogenesis (brown/black pigment) and thus increasing synthesis of pheomelanin (yellow/red pigment). The protein is Agouti-signaling protein (ASIP) of Macaca hecki (Heck's macaque).